Consider the following 462-residue polypeptide: Argininosuccinate lyase (462 aa).

Belongs to the lyase 1 family. Argininosuccinate lyase subfamily.

The protein resides in the cytoplasm. It catalyses the reaction 2-(N(omega)-L-arginino)succinate = fumarate + L-arginine. It functions in the pathway amino-acid biosynthesis; L-arginine biosynthesis; L-arginine from L-ornithine and carbamoyl phosphate: step 3/3. In Bacillus anthracis (strain A0248), this protein is Argininosuccinate lyase.